The following is a 360-amino-acid chain: Lipid-A-disaccharide synthase (360 aa).

It belongs to the LpxB family.

It catalyses the reaction a lipid X + a UDP-2-N,3-O-bis[(3R)-3-hydroxyacyl]-alpha-D-glucosamine = a lipid A disaccharide + UDP + H(+). The protein operates within bacterial outer membrane biogenesis; LPS lipid A biosynthesis. Condensation of UDP-2,3-diacylglucosamine and 2,3-diacylglucosamine-1-phosphate to form lipid A disaccharide, a precursor of lipid A, a phosphorylated glycolipid that anchors the lipopolysaccharide to the outer membrane of the cell. This is Lipid-A-disaccharide synthase from Helicobacter pylori (strain HPAG1).